The following is a 243-amino-acid chain: Small ribosomal subunit protein uS3 (243 aa).

One can recognise a KH type-2 domain in the interval 39–107 (MRKFVMSELK…ETHLNIVEVR (69 aa)). Positions 214–243 (ASERRAMEGDAQGPASRDRDRDRDRRRDNA) are disordered. Positions 229-243 (SRDRDRDRDRRRDNA) are enriched in basic and acidic residues.

This sequence belongs to the universal ribosomal protein uS3 family. As to quaternary structure, part of the 30S ribosomal subunit. Forms a tight complex with proteins S10 and S14.

Functionally, binds the lower part of the 30S subunit head. Binds mRNA in the 70S ribosome, positioning it for translation. The protein is Small ribosomal subunit protein uS3 of Rhizobium johnstonii (strain DSM 114642 / LMG 32736 / 3841) (Rhizobium leguminosarum bv. viciae).